The following is a 96-amino-acid chain: Protein RnfH (96 aa).

Belongs to the UPF0125 (RnfH) family.

This Cronobacter sakazakii (strain ATCC BAA-894) (Enterobacter sakazakii) protein is Protein RnfH.